Consider the following 259-residue polypeptide: Ribosomal RNA small subunit methyltransferase J (259 aa).

Residues 109–110 (RD), 125–126 (ER), 161–162 (SS), and D179 each bind S-adenosyl-L-methionine.

Belongs to the methyltransferase superfamily. RsmJ family.

The protein resides in the cytoplasm. The catalysed reaction is guanosine(1516) in 16S rRNA + S-adenosyl-L-methionine = N(2)-methylguanosine(1516) in 16S rRNA + S-adenosyl-L-homocysteine + H(+). In terms of biological role, specifically methylates the guanosine in position 1516 of 16S rRNA. The protein is Ribosomal RNA small subunit methyltransferase J of Shewanella putrefaciens (strain CN-32 / ATCC BAA-453).